A 570-amino-acid polypeptide reads, in one-letter code: Dihydroxy-acid dehydratase (570 aa).

Cys-61 contributes to the [2Fe-2S] cluster binding site. Asp-94 lines the Mg(2+) pocket. Cys-135 contacts [2Fe-2S] cluster. Mg(2+) is bound by residues Asp-136 and Lys-137. N6-carboxylysine is present on Lys-137. Cys-207 lines the [2Fe-2S] cluster pocket. Residue Glu-459 participates in Mg(2+) binding. The active-site Proton acceptor is the Ser-485.

It belongs to the IlvD/Edd family. Homodimer. [2Fe-2S] cluster serves as cofactor. It depends on Mg(2+) as a cofactor.

The enzyme catalyses (2R)-2,3-dihydroxy-3-methylbutanoate = 3-methyl-2-oxobutanoate + H2O. It catalyses the reaction (2R,3R)-2,3-dihydroxy-3-methylpentanoate = (S)-3-methyl-2-oxopentanoate + H2O. Its pathway is amino-acid biosynthesis; L-isoleucine biosynthesis; L-isoleucine from 2-oxobutanoate: step 3/4. It functions in the pathway amino-acid biosynthesis; L-valine biosynthesis; L-valine from pyruvate: step 3/4. Its function is as follows. Functions in the biosynthesis of branched-chain amino acids. Catalyzes the dehydration of (2R,3R)-2,3-dihydroxy-3-methylpentanoate (2,3-dihydroxy-3-methylvalerate) into 2-oxo-3-methylpentanoate (2-oxo-3-methylvalerate) and of (2R)-2,3-dihydroxy-3-methylbutanoate (2,3-dihydroxyisovalerate) into 2-oxo-3-methylbutanoate (2-oxoisovalerate), the penultimate precursor to L-isoleucine and L-valine, respectively. This Lactococcus lactis subsp. lactis (strain IL1403) (Streptococcus lactis) protein is Dihydroxy-acid dehydratase.